The primary structure comprises 144 residues: Small ribosomal subunit protein eS12 (144 aa).

It belongs to the eukaryotic ribosomal protein eS12 family.

This is Small ribosomal subunit protein eS12 (RPS12) from Trypanosoma brucei brucei.